The sequence spans 167 residues: EF-hand calcium-binding domain-containing protein 11 (167 aa).

3 EF-hand domains span residues 17 to 52, 91 to 126, and 127 to 162; these read AERK…LFGY, DPYE…VAPR, and LQER…GLAN. The Ca(2+) site is built by aspartate 140, aspartate 142, aspartate 144, histidine 146, and aspartate 151.

This chain is EF-hand calcium-binding domain-containing protein 11 (efcab11), found in Danio rerio (Zebrafish).